A 48-amino-acid chain; its full sequence is ATP synthase protein 8 (48 aa).

Residues 4 to 24 traverse the membrane as a helical segment; the sequence is LVPFFFVNQVVFAFIVLTVLI.

It belongs to the ATPase protein 8 family. In terms of assembly, F-type ATPases have 2 components, CF(1) - the catalytic core - and CF(0) - the membrane proton channel.

Its subcellular location is the mitochondrion membrane. Mitochondrial membrane ATP synthase (F(1)F(0) ATP synthase or Complex V) produces ATP from ADP in the presence of a proton gradient across the membrane which is generated by electron transport complexes of the respiratory chain. F-type ATPases consist of two structural domains, F(1) - containing the extramembraneous catalytic core and F(0) - containing the membrane proton channel, linked together by a central stalk and a peripheral stalk. During catalysis, ATP synthesis in the catalytic domain of F(1) is coupled via a rotary mechanism of the central stalk subunits to proton translocation. Part of the complex F(0) domain. Minor subunit located with subunit a in the membrane. This is ATP synthase protein 8 (atp8) from Emericella nidulans (Aspergillus nidulans).